A 159-amino-acid polypeptide reads, in one-letter code: 2-C-methyl-D-erythritol 2,4-cyclodiphosphate synthase (159 aa).

Residues D10 and H12 each coordinate a divalent metal cation. 4-CDP-2-C-methyl-D-erythritol 2-phosphate-binding positions include 10 to 12 (DVH) and 36 to 37 (HS). H44 provides a ligand contact to a divalent metal cation. Residues 58–60 (DIG) and R144 each bind 4-CDP-2-C-methyl-D-erythritol 2-phosphate.

This sequence belongs to the IspF family. In terms of assembly, homotrimer. It depends on a divalent metal cation as a cofactor.

The enzyme catalyses 4-CDP-2-C-methyl-D-erythritol 2-phosphate = 2-C-methyl-D-erythritol 2,4-cyclic diphosphate + CMP. It functions in the pathway isoprenoid biosynthesis; isopentenyl diphosphate biosynthesis via DXP pathway; isopentenyl diphosphate from 1-deoxy-D-xylulose 5-phosphate: step 4/6. Functionally, involved in the biosynthesis of isopentenyl diphosphate (IPP) and dimethylallyl diphosphate (DMAPP), two major building blocks of isoprenoid compounds. Catalyzes the conversion of 4-diphosphocytidyl-2-C-methyl-D-erythritol 2-phosphate (CDP-ME2P) to 2-C-methyl-D-erythritol 2,4-cyclodiphosphate (ME-CPP) with a corresponding release of cytidine 5-monophosphate (CMP). This chain is 2-C-methyl-D-erythritol 2,4-cyclodiphosphate synthase, found in Paraburkholderia phymatum (strain DSM 17167 / CIP 108236 / LMG 21445 / STM815) (Burkholderia phymatum).